We begin with the raw amino-acid sequence, 432 residues long: MSNEQMIDIKGPLIGEIEVPGDKSMTHRAIMLASLATGQSTIYKPLLGEDCLRTIEIFKLLGVNIELAEEKIIVDSPGYNKFKTPHQTLYTGNSGTTTRLLAGLLSGLNLNCVLSGDASIGKRPMDRVMKPLRLMGANITGIDDNFTPLIIKPASINGITYKMEVASAQVKSALLFASLFSNDSSKITELDVSRNHTETMFEQFNIPISISGKEITTQPNAIEHIKAKDFYVPGDISSAAFFIVAALITPGSDITIHNVGINPTRSGIIDIVKQMEGNIECLNITDTSEPTASIRVKYTPNLKPVLIEGDIVPKAIDELPIIALLCTQASGTSIIKDAEELKVKETNRIDTTADMLGLLGFELQPTDDGLIIHPSEFKKSATVDSLTDHRIGMMLAIASLLSDKPLNIRQFDAVNVSFPGFLPKLMLLENEG.

Residues lysine 23, serine 24, and arginine 28 each coordinate 3-phosphoshikimate. Phosphoenolpyruvate is bound at residue lysine 23. The phosphoenolpyruvate site is built by glycine 95 and arginine 123. Serine 167, glutamine 169, aspartate 317, and lysine 344 together coordinate 3-phosphoshikimate. A phosphoenolpyruvate-binding site is contributed by glutamine 169. The active-site Proton acceptor is aspartate 317. Phosphoenolpyruvate-binding residues include arginine 348 and arginine 390.

It belongs to the EPSP synthase family. As to quaternary structure, monomer.

Its subcellular location is the cytoplasm. It catalyses the reaction 3-phosphoshikimate + phosphoenolpyruvate = 5-O-(1-carboxyvinyl)-3-phosphoshikimate + phosphate. The protein operates within metabolic intermediate biosynthesis; chorismate biosynthesis; chorismate from D-erythrose 4-phosphate and phosphoenolpyruvate: step 6/7. Functionally, catalyzes the transfer of the enolpyruvyl moiety of phosphoenolpyruvate (PEP) to the 5-hydroxyl of shikimate-3-phosphate (S3P) to produce enolpyruvyl shikimate-3-phosphate and inorganic phosphate. The protein is 3-phosphoshikimate 1-carboxyvinyltransferase of Staphylococcus haemolyticus (strain JCSC1435).